We begin with the raw amino-acid sequence, 183 residues long: Dual-action ribosomal maturation protein DarP (183 aa).

This sequence belongs to the DarP family.

Its subcellular location is the cytoplasm. Functionally, member of a network of 50S ribosomal subunit biogenesis factors which assembles along the 30S-50S interface, preventing incorrect 23S rRNA structures from forming. Promotes peptidyl transferase center (PTC) maturation. The sequence is that of Dual-action ribosomal maturation protein DarP from Escherichia coli O6:H1 (strain CFT073 / ATCC 700928 / UPEC).